An 889-amino-acid polypeptide reads, in one-letter code: Cytoplasmic aconitate hydratase (889 aa).

Substrate is bound by residues Q86 and 205-207 (DSH). [4Fe-4S] cluster contacts are provided by C437, C503, and C506. Residues R536, R541, R699, and 779–780 (SR) each bind substrate.

The protein belongs to the aconitase/IPM isomerase family. As to quaternary structure, interacts (when associated with the 4Fe-4S) with FBXL5. Interacts with frataxin(81-210). [4Fe-4S] cluster is required as a cofactor.

It is found in the cytoplasm. The protein resides in the cytosol. It catalyses the reaction citrate = D-threo-isocitrate. Functionally, bifunctional iron sensor that switches between 2 activities depending on iron availability. Iron deprivation, promotes its mRNA binding activity through which it regulates the expression of genes involved in iron uptake, sequestration and utilization. Binds to iron-responsive elements (IRES) in the untranslated region of target mRNAs preventing for instance the translation of ferritin and aminolevulinic acid synthase and stabilizing the transferrin receptor mRNA. In terms of biological role, conversely, when cellular iron levels are high, binds a 4Fe-4S cluster which precludes RNA binding activity and promotes the aconitase activity, the isomerization of citrate to isocitrate via cis-aconitate. The protein is Cytoplasmic aconitate hydratase (ACO1) of Bos taurus (Bovine).